We begin with the raw amino-acid sequence, 114 residues long: Large ribosomal subunit protein uL22 (114 aa).

Belongs to the universal ribosomal protein uL22 family. In terms of assembly, part of the 50S ribosomal subunit.

Functionally, this protein binds specifically to 23S rRNA; its binding is stimulated by other ribosomal proteins, e.g. L4, L17, and L20. It is important during the early stages of 50S assembly. It makes multiple contacts with different domains of the 23S rRNA in the assembled 50S subunit and ribosome. The globular domain of the protein is located near the polypeptide exit tunnel on the outside of the subunit, while an extended beta-hairpin is found that lines the wall of the exit tunnel in the center of the 70S ribosome. The protein is Large ribosomal subunit protein uL22 of Desulfitobacterium hafniense (strain DSM 10664 / DCB-2).